Consider the following 436-residue polypeptide: Serine hydroxymethyltransferase (436 aa).

(6S)-5,6,7,8-tetrahydrofolate-binding positions include L133 and 137–139; that span reads GHL. K242 is subject to N6-(pyridoxal phosphate)lysine. 366–368 contributes to the (6S)-5,6,7,8-tetrahydrofolate binding site; it reads SPF.

The protein belongs to the SHMT family. As to quaternary structure, homodimer. Pyridoxal 5'-phosphate is required as a cofactor.

The protein resides in the cytoplasm. It carries out the reaction (6R)-5,10-methylene-5,6,7,8-tetrahydrofolate + glycine + H2O = (6S)-5,6,7,8-tetrahydrofolate + L-serine. The protein operates within one-carbon metabolism; tetrahydrofolate interconversion. It functions in the pathway amino-acid biosynthesis; glycine biosynthesis; glycine from L-serine: step 1/1. Its function is as follows. Catalyzes the reversible interconversion of serine and glycine with tetrahydrofolate (THF) serving as the one-carbon carrier. This reaction serves as the major source of one-carbon groups required for the biosynthesis of purines, thymidylate, methionine, and other important biomolecules. Also exhibits THF-independent aldolase activity toward beta-hydroxyamino acids, producing glycine and aldehydes, via a retro-aldol mechanism. The sequence is that of Serine hydroxymethyltransferase from Novosphingobium aromaticivorans (strain ATCC 700278 / DSM 12444 / CCUG 56034 / CIP 105152 / NBRC 16084 / F199).